The following is a 725-amino-acid chain: Putative coiled-coil domain-containing protein 144B (725 aa).

Residues 1-11 (MASWGGEKRGG) show a composition bias toward basic and acidic residues. Disordered stretches follow at residues 1-25 (MASW…ATRK), 87-188 (AARS…NLTE), 213-260 (LPEN…DCDR), 453-485 (NMNQ…DSDR), and 528-586 (EEEM…KVKN). 2 stretches are compositionally biased toward polar residues: residues 129-150 (PESL…LSDE) and 165-178 (PSVS…QSAT). A coiled-coil region spans residues 215–244 (ENKESKEAEQDLELTSEEEQERLKGCENKQ). The span at 224–234 (QDLELTSEEEQ) shows a compositional bias: acidic residues. Residues 453–467 (NMNQNSDSGSTNNYK) are compositionally biased toward polar residues. Residues 490-546 (YLHEELQQDMQKFKNEVNTLEEEFLALKKENVQLHKEVEEEMEKHRSNSTELSGTLT) are a coiled coil. The span at 528–537 (EEEMEKHRSN) shows a compositional bias: basic and acidic residues. Positions 543–552 (GTLTDGTTVG) are enriched in low complexity. Positions 563 to 583 (PRKENEEHDRPADKTANEKNK) are enriched in basic and acidic residues. A coiled-coil region spans residues 648-713 (LLKLKNNHCD…ALKQENGRKE (66 aa)).

It belongs to the CCDC144 family.

The sequence is that of Putative coiled-coil domain-containing protein 144B from Homo sapiens (Human).